Here is a 370-residue protein sequence, read N- to C-terminus: A-type ATP synthase subunit C (370 aa).

It belongs to the V-ATPase V0D/AC39 subunit family. In terms of assembly, has multiple subunits with at least A(3), B(3), C, D, E, F, H, I and proteolipid K(x).

The protein resides in the cell membrane. In terms of biological role, component of the A-type ATP synthase that produces ATP from ADP in the presence of a proton gradient across the membrane. The polypeptide is A-type ATP synthase subunit C (Pyrococcus horikoshii (strain ATCC 700860 / DSM 12428 / JCM 9974 / NBRC 100139 / OT-3)).